Reading from the N-terminus, the 165-residue chain is Ribosome maturation factor RimM (165 aa).

Residues 94–165 (EDEFYIADLT…YVILNYQREA (72 aa)) form the PRC barrel domain.

Belongs to the RimM family. Binds ribosomal protein uS19.

Its subcellular location is the cytoplasm. Functionally, an accessory protein needed during the final step in the assembly of 30S ribosomal subunit, possibly for assembly of the head region. Essential for efficient processing of 16S rRNA. May be needed both before and after RbfA during the maturation of 16S rRNA. It has affinity for free ribosomal 30S subunits but not for 70S ribosomes. In Rickettsia rickettsii (strain Sheila Smith), this protein is Ribosome maturation factor RimM.